Reading from the N-terminus, the 255-residue chain is 4-hydroxy-tetrahydrodipicolinate reductase (255 aa).

Residues 8 to 13, 89 to 91, and 114 to 117 contribute to the NAD(+) site; these read GASGRM, GTT, and SSNY. Residue His146 is the Proton donor/acceptor of the active site. His147 serves as a coordination point for (S)-2,3,4,5-tetrahydrodipicolinate. The Proton donor role is filled by Lys150. Position 156–157 (156–157) interacts with (S)-2,3,4,5-tetrahydrodipicolinate; it reads GT.

Belongs to the DapB family.

It localises to the cytoplasm. It carries out the reaction (S)-2,3,4,5-tetrahydrodipicolinate + NAD(+) + H2O = (2S,4S)-4-hydroxy-2,3,4,5-tetrahydrodipicolinate + NADH + H(+). It catalyses the reaction (S)-2,3,4,5-tetrahydrodipicolinate + NADP(+) + H2O = (2S,4S)-4-hydroxy-2,3,4,5-tetrahydrodipicolinate + NADPH + H(+). Its pathway is amino-acid biosynthesis; L-lysine biosynthesis via DAP pathway; (S)-tetrahydrodipicolinate from L-aspartate: step 4/4. Functionally, catalyzes the conversion of 4-hydroxy-tetrahydrodipicolinate (HTPA) to tetrahydrodipicolinate. This is 4-hydroxy-tetrahydrodipicolinate reductase from Methanoregula boonei (strain DSM 21154 / JCM 14090 / 6A8).